A 350-amino-acid polypeptide reads, in one-letter code: Eukaryotic translation initiation factor 3 subunit I (350 aa).

WD repeat units follow at residues 8-49, 51-89, 91-135, 149-188, 198-240, and 296-335; these read GHER…GTLE, HQGV…CVYT, DSPS…ATLS, SEGS…LVTS, EKNV…KVYK, and GHFG…QDFL.

Belongs to the eIF-3 subunit I family. Component of the eukaryotic translation initiation factor 3 (eIF-3) complex.

The protein resides in the cytoplasm. Functionally, component of the eukaryotic translation initiation factor 3 (eIF-3) complex, which is involved in protein synthesis of a specialized repertoire of mRNAs and, together with other initiation factors, stimulates binding of mRNA and methionyl-tRNAi to the 40S ribosome. The eIF-3 complex specifically targets and initiates translation of a subset of mRNAs involved in cell proliferation. The sequence is that of Eukaryotic translation initiation factor 3 subunit I from Candida albicans (strain SC5314 / ATCC MYA-2876) (Yeast).